A 293-amino-acid polypeptide reads, in one-letter code: Glutamyl-Q tRNA(Asp) synthetase (293 aa).

Residues 9–13 (RFAPS) and Glu45 contribute to the L-glutamate site. A 'HIGH' region motif is present at residues 12-22 (PSPSGSLHFGS). The Zn(2+) site is built by Cys101, Cys103, Tyr115, and Cys119. Tyr172 and Arg190 together coordinate L-glutamate. The 'KMSKS' region signature appears at 228–232 (KLSKQ). Residue Lys231 participates in ATP binding.

Belongs to the class-I aminoacyl-tRNA synthetase family. GluQ subfamily. The cofactor is Zn(2+).

Catalyzes the tRNA-independent activation of glutamate in presence of ATP and the subsequent transfer of glutamate onto a tRNA(Asp). Glutamate is transferred on the 2-amino-5-(4,5-dihydroxy-2-cyclopenten-1-yl) moiety of the queuosine in the wobble position of the QUC anticodon. In Shewanella frigidimarina (strain NCIMB 400), this protein is Glutamyl-Q tRNA(Asp) synthetase.